The sequence spans 507 residues: Glycerol kinase (507 aa).

Thr-13 contacts ADP. ATP is bound by residues Thr-13, Thr-14, and Ser-15. Residue Thr-13 participates in sn-glycerol 3-phosphate binding. Arg-17 provides a ligand contact to ADP. Positions 83, 84, 135, and 245 each coordinate sn-glycerol 3-phosphate. Arg-83, Glu-84, Tyr-135, Asp-245, and Gln-246 together coordinate glycerol. ADP-binding residues include Thr-267 and Gly-310. ATP contacts are provided by Thr-267, Gly-310, Gln-314, and Gly-411. ADP contacts are provided by Gly-411 and Asn-415.

It belongs to the FGGY kinase family.

It catalyses the reaction glycerol + ATP = sn-glycerol 3-phosphate + ADP + H(+). The protein operates within polyol metabolism; glycerol degradation via glycerol kinase pathway; sn-glycerol 3-phosphate from glycerol: step 1/1. With respect to regulation, inhibited by fructose 1,6-bisphosphate (FBP). Functionally, key enzyme in the regulation of glycerol uptake and metabolism. Catalyzes the phosphorylation of glycerol to yield sn-glycerol 3-phosphate. The protein is Glycerol kinase of Halorhodospira halophila (strain DSM 244 / SL1) (Ectothiorhodospira halophila (strain DSM 244 / SL1)).